Reading from the N-terminus, the 704-residue chain is Polyribonucleotide nucleotidyltransferase (704 aa).

Mg(2+) contacts are provided by Asp-487 and Asp-493. A KH domain is found at 554-613 (PRLLTIKIHPDKIREVIGKGGSTIQAITKETGTQIDIQDDGTIIIASVNAIAAQAAKSRI). In terms of domain architecture, S1 motif spans 623-691 (GRIYEGKVAK…KQGRIRLSIK (69 aa)).

This sequence belongs to the polyribonucleotide nucleotidyltransferase family. Component of the RNA degradosome, which is a multiprotein complex involved in RNA processing and mRNA degradation. Mg(2+) is required as a cofactor.

The protein resides in the cytoplasm. The enzyme catalyses RNA(n+1) + phosphate = RNA(n) + a ribonucleoside 5'-diphosphate. Its function is as follows. Involved in mRNA degradation. Catalyzes the phosphorolysis of single-stranded polyribonucleotides processively in the 3'- to 5'-direction. The chain is Polyribonucleotide nucleotidyltransferase from Xanthomonas euvesicatoria pv. vesicatoria (strain 85-10) (Xanthomonas campestris pv. vesicatoria).